A 110-amino-acid chain; its full sequence is Hydrogenase maturation factor HypA (110 aa).

His2 provides a ligand contact to Ni(2+). Zn(2+) is bound by residues Cys70, Cys73, Cys86, and Cys89.

It belongs to the HypA/HybF family.

Functionally, involved in the maturation of [NiFe] hydrogenases. Required for nickel insertion into the metal center of the hydrogenase. The polypeptide is Hydrogenase maturation factor HypA (Geobacter metallireducens (strain ATCC 53774 / DSM 7210 / GS-15)).